Here is a 35-residue protein sequence, read N- to C-terminus: DDCLGMFSSCDPNNDKCCPNRKCSRKDQWCKYQLW.

Disulfide bonds link Cys-3–Cys-18, Cys-10–Cys-23, and Cys-17–Cys-30.

Belongs to the neurotoxin 10 (Hwtx-1) family. 59 (Tltx) subfamily. Expressed by the venom gland.

The protein resides in the secreted. In terms of biological role, gating-modifier toxin that inhibits both sodium (Nav) and calcium (Cav3) channels by inducing hyperpolarizing shift in voltage-dependence of activation and steady state inactivation. Inhibits Nav1.1/SCN1A, Nav1.2/SCN2A, Nav1.3/SCN3A, Nav1.6/SCN6A, Nav1.7/SCN9A and Cav3.1/CACNA1G sodium and calcium channels at nanomolar concentrations (IC(50)=81-301 nM). Surprisingly, selectively slows fast inactivation of Nav1.3/SCN3A. Also shows moderate inhibition of Cav3.2/CACNA1H calcium channels (IC(50)=1233 nM). Ex vivo, nearly ablates neuronal mechanosensitivity in afferent fibers innervating the colon and the bladder. In vivo, in a mouse model of irritable bowel syndrome, intracolonic administration of the toxin reverses colonic mechanical hypersensitivity. The sequence is that of Mu/omega-theraphotoxin-Tap1a from Theraphosa apophysis (Goliath pinkfoot tarantula).